We begin with the raw amino-acid sequence, 85 residues long: Large ribosomal subunit protein uL23 (85 aa).

Belongs to the universal ribosomal protein uL23 family. As to quaternary structure, part of the 50S ribosomal subunit. Interacts with protein L29 and weakly with protein L39e.

Its function is as follows. Binds to a specific region on the 23S rRNA. Located at the polypeptide exit tunnel on the outside of the subunit. The sequence is that of Large ribosomal subunit protein uL23 from Haloarcula marismortui (strain ATCC 43049 / DSM 3752 / JCM 8966 / VKM B-1809) (Halobacterium marismortui).